The following is a 484-amino-acid chain: UDP-N-acetylmuramate--L-alanine ligase (484 aa).

ATP is bound at residue 124 to 130 (GTHGKTT).

It belongs to the MurCDEF family.

Its subcellular location is the cytoplasm. It carries out the reaction UDP-N-acetyl-alpha-D-muramate + L-alanine + ATP = UDP-N-acetyl-alpha-D-muramoyl-L-alanine + ADP + phosphate + H(+). It functions in the pathway cell wall biogenesis; peptidoglycan biosynthesis. Its function is as follows. Cell wall formation. In Pseudoalteromonas atlantica (strain T6c / ATCC BAA-1087), this protein is UDP-N-acetylmuramate--L-alanine ligase.